Consider the following 411-residue polypeptide: Glutamate dehydrogenase (411 aa).

Lysine 102 is a catalytic residue.

Belongs to the Glu/Leu/Phe/Val dehydrogenases family.

It catalyses the reaction L-glutamate + NAD(+) + H2O = 2-oxoglutarate + NH4(+) + NADH + H(+). It carries out the reaction L-glutamate + NADP(+) + H2O = 2-oxoglutarate + NH4(+) + NADPH + H(+). This Vitis vinifera (Grape) protein is Glutamate dehydrogenase (GDH).